The sequence spans 298 residues: Heme A synthase (298 aa).

Residues 1-6 lie on the Cytoplasmic side of the membrane; the sequence is MHRSLK. A helical membrane pass occupies residues 7–27; the sequence is IFGTLTSIGMVIVLMQGALVT. Residues 28-62 are Extracellular-facing; sequence KTESGEGCGATWPLCFGEVIPTNPAIETIIEYSHR. Residues Cys35 and Cys42 are joined by a disulfide bond. Glu58 is a catalytic residue. His61 is a heme o binding site. The helical transmembrane segment at 63–83 threads the bilayer; sequence IVSGLLGAMVIILAIWAWRKL. At 84-92 the chain is on the cytoplasmic side; it reads SHIRETKVM. Residues 93 to 113 form a helical membrane-spanning segment; the sequence is AILAVLFIIFQGLLGAGAVVF. At 114 to 117 the chain is on the extracellular side; sequence GQSH. A helical membrane pass occupies residues 118–138; that stretch reads AILALHFGISAISLATVVLLT. His123 serves as a coordination point for heme o. The Cytoplasmic portion of the chain corresponds to 139-158; that stretch reads TLAFEDGKPNPPALIVKKGY. A helical transmembrane segment spans residues 159–179; that stretch reads KGYILAVFAYCYAVIYTGAYV. At 180–209 the chain is on the extracellular side; sequence KHTQATLACGDFPLCNGQWIPMLSGPVGAH. A disulfide bridge links Cys188 with Cys194. Residues 210-230 form a helical membrane-spanning segment; that stretch reads FFHRVAGTLLLILLVVALIWT. Heme b is bound at residue His212. Residues 231–244 are Cytoplasmic-facing; the sequence is LRKYSHYRSLVWTH. Residues 245-265 traverse the membrane as a helical segment; that stretch reads ILCVILVLTQYATGISIVLTG. The Extracellular segment spans residues 266–271; sequence NELFVA. Residues 272 to 292 traverse the membrane as a helical segment; the sequence is MMHALIVSILFTTLCYIVMIL. A heme b-binding site is contributed by His274. Topologically, residues 293–298 are cytoplasmic; the sequence is SRNKAV.

This sequence belongs to the COX15/CtaA family. Type 1 subfamily. Interacts with CtaB. It depends on heme b as a cofactor.

The protein resides in the cell membrane. The catalysed reaction is Fe(II)-heme o + 2 A + H2O = Fe(II)-heme a + 2 AH2. Its pathway is porphyrin-containing compound metabolism; heme A biosynthesis; heme A from heme O: step 1/1. In terms of biological role, catalyzes the conversion of heme O to heme A by two successive hydroxylations of the methyl group at C8. The first hydroxylation forms heme I, the second hydroxylation results in an unstable dihydroxymethyl group, which spontaneously dehydrates, resulting in the formyl group of heme A. This Halalkalibacterium halodurans (strain ATCC BAA-125 / DSM 18197 / FERM 7344 / JCM 9153 / C-125) (Bacillus halodurans) protein is Heme A synthase.